The following is a 784-amino-acid chain: Kinesin-like protein Klp68D (784 aa).

Residues 19–344 (CVQVVVRCRP…LRYASRAKSI (326 aa)) form the Kinesin motor domain. 106-113 (GQTGTGKT) is a binding site for ATP. Residues 351–385 (NEDPQDAKLKEYQEEIERLKRLIGPQQQQRSEKQV) are a coiled coil. Disordered regions lie at residues 371-449 (RLIG…ERER), 605-652 (KFSS…PSSL), and 742-784 (IKSS…LVNK). The span at 386 to 396 (TAKKQRVKKPK) shows a compositional bias: basic residues. Over residues 416–428 (PVEDDSDPEGAES) the composition is skewed to acidic residues. Positions 426–582 (AESESDKENE…KRQLLIIDNF (157 aa)) form a coiled coil. A compositionally biased stretch (basic and acidic residues) spans 429-449 (ESDKENEAEVAKSNEELERER). The span at 622-634 (SSKRPVSHPQRRR) shows a compositional bias: basic residues. The segment covering 769–778 (KKPASAYPKA) has biased composition (low complexity).

This sequence belongs to the TRAFAC class myosin-kinesin ATPase superfamily. Kinesin family. Kinesin II subfamily. As to expression, expressed primarily in the central nervous system and in a subset of the peripheral nervous system during embryogenesis.

The protein localises to the cytoplasm. The protein resides in the cytoskeleton. Functionally, plus-end directed microtubule motor that may be used for anterograde axonal transport and could conceivably move cargos in fly neurons different than those moved by kinesin heavy chain or other plus-end directed motors. In Drosophila melanogaster (Fruit fly), this protein is Kinesin-like protein Klp68D (Klp68D).